The sequence spans 589 residues: MEAEETMECLQEFPEHHKMILDRLNEQREQDRFTDITLIVDGHHFKAHKAVLAACSKFFYKFFQEFTQEPLVEIEGVSKMAFRHLIEFTYTAKLMIQGEEEANDVWKAAEFLQMLEAIKALEVRNKENSAPLEENTTGKNEAKKRKIAETSNVITESLPSAESEPVEIEVEIAEGTIEVEDEGVETLEEVASAKQSVKYIQSTGSSDDSALALLADITSKYRQGDRKGQIKEDGCPSDPTSKQEHMKSHSTESFKCEICNKRYLRESAWKQHLNCYHLEEGGVSKKQRTGKKIHVCQYCEKQFDHFGHFKEHLRKHTGEKPFECPNCHERFARNSTLKCHLTACQTGVGAKKGRKKLYECQVCNSVFNSWDQFKDHLVIHTGDKPNHCTLCDLWFMQGNELRRHLSDAHNISERLVTEEVLSVETRVQTEPVTSMTIIEQVGKVHVLPLLQVQVDSAQVTVEQVHPDLLQGSQVHDSHMSELPEQVQVSYLEVGRIQTEEGTEVHVEELHVERVNQMPVEVQTELLEADLDHATPEIMNQEERESSQADAAEAAREDHEDAEDLETKPTVDSEAEKAENEDRTAMPVLE.

The region spanning T34–G98 is the BTB domain. Positions T137 to A148 match the Nuclear localization signal 1 motif. Residues G224 to G234 show a composition bias toward basic and acidic residues. Positions G224–K247 are disordered. 2 C2H2-type zinc fingers span residues F254–H277 and H294–H316. Glycyl lysine isopeptide (Lys-Gly) (interchain with G-Cter in SUMO2) cross-links involve residues K255 and K261. The short motif at V283 to H294 is the Nuclear localization signal 2 element. The segment at F322–G347 adopts a C2H2-type 3; degenerate zinc-finger fold. 2 consecutive C2H2-type zinc fingers follow at residues Y358–H380 and N386–H409. Residues N539–T583 show a composition bias toward basic and acidic residues. The disordered stretch occupies residues N539 to E589. Residue K567 forms a Glycyl lysine isopeptide (Lys-Gly) (interchain with G-Cter in SUMO) linkage.

The protein belongs to the krueppel C2H2-type zinc-finger protein family. Post-translationally, monosumoylated at Lys-567 by CBX4 and UHRF2. Sumoylation may potentiate ZNF131 inhibition of estrogen signaling. Sumoylation does not interfere with ubiquitination. In terms of processing, ubiquitinated.

The protein localises to the nucleus. Functionally, may be involved in transcriptional regulation as a repressor of ESR1/ER-alpha signaling. Plays a role during development and organogenesis as well as in the function of the adult central nervous system. This Pongo abelii (Sumatran orangutan) protein is Zinc finger protein 131 (ZNF131).